The following is an 841-amino-acid chain: Probable outer membrane usher protein EcpC (841 aa).

Positions 1–29 (MPLRRFSPGLKAQFAFGMVFLFVQPDASA) are cleaved as a signal peptide.

This sequence belongs to the EcpC/MatD family.

In terms of biological role, part of the ecpRABCDE operon, which encodes the E.coli common pilus (ECP). ECP is found in both commensal and pathogenic strains and plays a dual role in early-stage biofilm development and host cell recognition. This chain is Probable outer membrane usher protein EcpC (ecpC), found in Escherichia coli O127:H6 (strain E2348/69 / EPEC).